The following is a 383-amino-acid chain: GTPase-interacting component 2 (383 aa).

Residues 63–106 (SNKKNIELPPLSPNSHPSCHHRRSNSNSAKSKESSSSSSSANKT) form a disordered region. Positions 87-105 (NSNSAKSKESSSSSSSANK) are enriched in low complexity. The CRIB domain maps to 134–147 (ISTPFDFQHISHAD). A compositionally biased stretch (polar residues) spans 155–165 (EQLQEPSSLST). A disordered region spans residues 155–189 (EQLQEPSSLSTEIKDDYTSSSSKRDSKSLNKAFVT). Positions 166-182 (EIKDDYTSSSSKRDSKS) are enriched in basic and acidic residues. 5 positions are modified to phosphoserine: S254, S258, S337, S345, and S367. The interval 319–361 (ETPNSNKDSAKAFFPSRQSPLPKRRNSIATPSPQSKFSYSDSP) is disordered. Over residues 345–361 (SIATPSPQSKFSYSDSP) the composition is skewed to polar residues.

It belongs to the BORG/CEP family. As to quaternary structure, interacts with GTP-bound CDC42.

The protein resides in the bud neck. It is found in the bud tip. Its subcellular location is the cytoplasm. The protein localises to the cell cortex. It localises to the cytoskeleton. Functionally, required for cell size and shape control, bud site selection, bud emergence, actin cytoskeletal organization, mitotic spindle orientation/positioning, and mating projection formation in response to mating pheromone. The protein is GTPase-interacting component 2 (GIC2) of Saccharomyces cerevisiae (strain ATCC 204508 / S288c) (Baker's yeast).